A 359-amino-acid chain; its full sequence is uncharacterized protein (359 aa).

Disordered stretches follow at residues 90-117 (QESPVRGMSPAPNGAKVPPRPHSEPSRK), 132-161 (IKKEEIKAKRPPSPPKACSTPGSCSSGMTS), and 235-359 (TSME…THRR). The span at 151–161 (TPGSCSSGMTS) shows a compositional bias: polar residues. Low complexity predominate over residues 245–259 (KPPTVKSPPTVKLPP). The segment covering 286–299 (EENKEVPKEAEHKP) has biased composition (basic and acidic residues).

This is an uncharacterized protein from Homo sapiens (Human).